The chain runs to 343 residues: UDP-glucuronic acid decarboxylase 6 (343 aa).

Positions 1 to 22 are disordered; it reads MASNSSNGTTTTKPPPMPSPLR. Position 2 is an N-acetylalanine (Ala2). 62 to 87 contributes to the NAD(+) binding site; it reads DNYFTGSKDNLKKWIGHPRFELIRHD. Residue Arg171 participates in substrate binding. Tyr174 (proton acceptor) is an active-site residue. Position 174–178 (174–178) interacts with NAD(+); it reads YDEGK. Asn203 lines the substrate pocket. Residue Arg215 participates in NAD(+) binding. Substrate-binding positions include 216 to 220, 233 to 240, and 300 to 304; these read VVSNF, QKPGTQTR, and DPRQR.

The protein belongs to the NAD(P)-dependent epimerase/dehydratase family. UDP-glucuronic acid decarboxylase subfamily. NAD(+) is required as a cofactor.

It localises to the cytoplasm. It catalyses the reaction UDP-alpha-D-glucuronate + H(+) = UDP-alpha-D-xylose + CO2. It participates in nucleotide-sugar biosynthesis; UDP-alpha-D-xylose biosynthesis; UDP-alpha-D-xylose from UDP-alpha-D-glucuronate: step 1/1. Catalyzes the NAD-dependent decarboxylation of UDP-glucuronic acid to UDP-xylose. Necessary for the biosynthesis of the core tetrasaccharide in glycosaminoglycan biosynthesis. The sequence is that of UDP-glucuronic acid decarboxylase 6 (UXS6) from Arabidopsis thaliana (Mouse-ear cress).